We begin with the raw amino-acid sequence, 49 residues long: Osteocalcin (49 aa).

Glutamine 1 bears the Pyrrolidone carboxylic acid mark. The region spanning 1–47 (QLINGQGAPAPYPDPLEPKREVCELNPDCDELADQVGLQDAYQRFYG) is the Gla domain. Proline 9 bears the 4-hydroxyproline mark. Positions 17, 21, 24, and 30 each coordinate Ca(2+). A 4-carboxyglutamate mark is found at glutamate 17, glutamate 21, and glutamate 24. Cysteine 23 and cysteine 29 are joined by a disulfide.

It belongs to the osteocalcin/matrix Gla protein family. In terms of processing, gamma-carboxyglutamate residues are formed by vitamin K dependent carboxylation by GGCX. These residues are essential for the binding of calcium. Decarboxylation promotes the hormone activity.

It localises to the secreted. Functionally, the carboxylated form is one of the main organic components of the bone matrix, which constitutes 1-2% of the total bone protein: it acts as a negative regulator of bone formation and is required to limit bone formation without impairing bone resorption or mineralization. The carboxylated form binds strongly to apatite and calcium. In terms of biological role, the uncarboxylated form acts as a hormone secreted by osteoblasts, which regulates different cellular processes, such as energy metabolism, male fertility and brain development. Regulates of energy metabolism by acting as a hormone favoring pancreatic beta-cell proliferation, insulin secretion and sensitivity and energy expenditure. Uncarboxylated osteocalcin hormone also promotes testosterone production in the testes: acts as a ligand for G protein-coupled receptor GPRC6A at the surface of Leydig cells, initiating a signaling response that promotes the expression of enzymes required for testosterone synthesis in a CREB-dependent manner. Also acts as a regulator of brain development: osteocalcin hormone crosses the blood-brain barrier and acts as a ligand for GPR158 on neurons, initiating a signaling response that prevents neuronal apoptosis in the hippocampus, favors the synthesis of all monoamine neurotransmitters and inhibits that of gamma-aminobutyric acid (GABA). Osteocalcin also crosses the placenta during pregnancy and maternal osteocalcin is required for fetal brain development. The chain is Osteocalcin (BGLAP) from Oryctolagus cuniculus (Rabbit).